Reading from the N-terminus, the 282-residue chain is Bifunctional protein FolD 1 (282 aa).

Residues 167–169 (GRS) and serine 192 each bind NADP(+).

Belongs to the tetrahydrofolate dehydrogenase/cyclohydrolase family. As to quaternary structure, homodimer.

The enzyme catalyses (6R)-5,10-methylene-5,6,7,8-tetrahydrofolate + NADP(+) = (6R)-5,10-methenyltetrahydrofolate + NADPH. The catalysed reaction is (6R)-5,10-methenyltetrahydrofolate + H2O = (6R)-10-formyltetrahydrofolate + H(+). It functions in the pathway one-carbon metabolism; tetrahydrofolate interconversion. Functionally, catalyzes the oxidation of 5,10-methylenetetrahydrofolate to 5,10-methenyltetrahydrofolate and then the hydrolysis of 5,10-methenyltetrahydrofolate to 10-formyltetrahydrofolate. This Colwellia psychrerythraea (strain 34H / ATCC BAA-681) (Vibrio psychroerythus) protein is Bifunctional protein FolD 1.